Consider the following 358-residue polypeptide: MRKTVIVAMSGGVDSSVVAYLLKKQGEYNVVGLFMKNWGEQDENGECTATKDFRDVERIAEQLSIPYYTVSFSKEYKERVFSRFLREYANGYTPNPDVLCNREIKFDLLQKKVRELKGDFLATGHYCRGGADGTGLSRGIDPNKDQSYFLCGTPKDALSNVLFPLGGMYKTEVRRIAQEAGLATATKKDSTGICFIGKRPFKSFLEQFVADSPGDIIDFDTQQVVGRHEGAHYYTIGQRRGLNIGGMEKPCYVLSKNMEKNIVYIVRGEDHPLLYRQELLAKELNWFVPLQEPMICSAKVRYRSPDEKCSVYPLEDGTVKVIFDVPVKAVTPGQTVAFYQGDICLGGGVIEVPMIHQL.

ATP is bound by residues 8 to 15 (AMSGGVDS) and Met-35. Residues 95–97 (NPD) are interaction with target base in tRNA. Residue Cys-100 is the Nucleophile of the active site. A disulfide bond links Cys-100 and Cys-194. Gly-124 lines the ATP pocket. The interaction with tRNA stretch occupies residues 144 to 146 (KDQ). The Cysteine persulfide intermediate role is filled by Cys-194. The interaction with tRNA stretch occupies residues 301 to 302 (RY).

Belongs to the MnmA/TRMU family.

It localises to the cytoplasm. The enzyme catalyses S-sulfanyl-L-cysteinyl-[protein] + uridine(34) in tRNA + AH2 + ATP = 2-thiouridine(34) in tRNA + L-cysteinyl-[protein] + A + AMP + diphosphate + H(+). Catalyzes the 2-thiolation of uridine at the wobble position (U34) of tRNA, leading to the formation of s(2)U34. The sequence is that of tRNA-specific 2-thiouridylase MnmA from Chlamydia trachomatis serovar D (strain ATCC VR-885 / DSM 19411 / UW-3/Cx).